The following is a 427-amino-acid chain: Trigger factor (427 aa).

The region spanning 163-248 (GDTVILDFEG…LHEIKTKEVP (86 aa)) is the PPIase FKBP-type domain.

This sequence belongs to the FKBP-type PPIase family. Tig subfamily.

It localises to the cytoplasm. The catalysed reaction is [protein]-peptidylproline (omega=180) = [protein]-peptidylproline (omega=0). Involved in protein export. Acts as a chaperone by maintaining the newly synthesized protein in an open conformation. Functions as a peptidyl-prolyl cis-trans isomerase. The polypeptide is Trigger factor (Listeria welshimeri serovar 6b (strain ATCC 35897 / DSM 20650 / CCUG 15529 / CIP 8149 / NCTC 11857 / SLCC 5334 / V8)).